Here is a 511-residue protein sequence, read N- to C-terminus: ADP,ATP carrier protein 4 (511 aa).

12 helical membrane passes run 34 to 54, 70 to 90, 102 to 122, 157 to 177, 192 to 212, 231 to 251, 296 to 316, 330 to 350, 361 to 381, 390 to 410, 453 to 473, and 476 to 496; these read VSKF…QNLI, IISF…TAIY, IFYL…YVIF, FSLF…LLFW, FYPL…QFLE, FHTL…IIAI, LIAT…GPWK, AAFI…FVVL, FTAA…FFAV, LIIA…IGAI, LGKS…PSAS, and SIST…LWAT.

The protein belongs to the ADP/ATP translocase tlc family.

The protein resides in the cell membrane. Provides the rickettsial cell with host ATP in exchange for rickettsial ADP. This is an obligate exchange system. This energy acquiring activity is an important component of rickettsial parasitism. In Rickettsia conorii (strain ATCC VR-613 / Malish 7), this protein is ADP,ATP carrier protein 4 (tlcD).